The primary structure comprises 292 residues: 4-hydroxy-tetrahydrodipicolinate synthase (292 aa).

Thr-45 lines the pyruvate pocket. Tyr-133 (proton donor/acceptor) is an active-site residue. The active-site Schiff-base intermediate with substrate is Lys-162. Ile-204 serves as a coordination point for pyruvate.

The protein belongs to the DapA family. In terms of assembly, homotetramer; dimer of dimers.

It localises to the cytoplasm. The enzyme catalyses L-aspartate 4-semialdehyde + pyruvate = (2S,4S)-4-hydroxy-2,3,4,5-tetrahydrodipicolinate + H2O + H(+). It functions in the pathway amino-acid biosynthesis; L-lysine biosynthesis via DAP pathway; (S)-tetrahydrodipicolinate from L-aspartate: step 3/4. Its function is as follows. Catalyzes the condensation of (S)-aspartate-beta-semialdehyde [(S)-ASA] and pyruvate to 4-hydroxy-tetrahydrodipicolinate (HTPA). The chain is 4-hydroxy-tetrahydrodipicolinate synthase from Nitratidesulfovibrio vulgaris (strain ATCC 29579 / DSM 644 / CCUG 34227 / NCIMB 8303 / VKM B-1760 / Hildenborough) (Desulfovibrio vulgaris).